Here is a 263-residue protein sequence, read N- to C-terminus: Endonuclease 8 (263 aa).

P2 (schiff-base intermediate with DNA) is an active-site residue. Catalysis depends on E3, which acts as the Proton donor. K53 (proton donor; for beta-elimination activity) is an active-site residue. Positions 70, 125, and 169 each coordinate DNA. The FPG-type zinc-finger motif lies at 229 to 263 (KVFHRDGELCERCGGIIEKTTLSSRPFYWCPGCQH). R253 serves as the catalytic Proton donor; for delta-elimination activity.

Belongs to the FPG family. The cofactor is Zn(2+).

The catalysed reaction is 2'-deoxyribonucleotide-(2'-deoxyribose 5'-phosphate)-2'-deoxyribonucleotide-DNA = a 3'-end 2'-deoxyribonucleotide-(2,3-dehydro-2,3-deoxyribose 5'-phosphate)-DNA + a 5'-end 5'-phospho-2'-deoxyribonucleoside-DNA + H(+). Functionally, involved in base excision repair of DNA damaged by oxidation or by mutagenic agents. Acts as a DNA glycosylase that recognizes and removes damaged bases. Has a preference for oxidized pyrimidines, such as thymine glycol, 5,6-dihydrouracil and 5,6-dihydrothymine. Has AP (apurinic/apyrimidinic) lyase activity and introduces nicks in the DNA strand. Cleaves the DNA backbone by beta-delta elimination to generate a single-strand break at the site of the removed base with both 3'- and 5'-phosphates. The polypeptide is Endonuclease 8 (Shigella flexneri serotype 5b (strain 8401)).